Reading from the N-terminus, the 509-residue chain is Scavenger receptor class B member 1 (509 aa).

The Cytoplasmic portion of the chain corresponds to 1–11; the sequence is MGGSARARWVA. A helical membrane pass occupies residues 12 to 32; that stretch reads VGLGVVGLLCAVLGVVMILVM. The Extracellular portion of the chain corresponds to 33-440; it reads PSLIKQQVLK…YTQLVLMPQV (408 aa). N-linked (GlcNAc...) asparagine glycans are attached at residues asparagine 102, asparagine 108, asparagine 173, asparagine 212, asparagine 227, asparagine 255, asparagine 310, asparagine 330, and asparagine 383. A disulfide bond links cysteine 251 and cysteine 384. The helical transmembrane segment at 441-461 threads the bilayer; that stretch reads LQYVQYVLLGLGGLLLLVPVI. The Cytoplasmic portion of the chain corresponds to 462–509; sequence YQLRSQEKCFLFWSGSKKGSQDKEAIQAYSESLMSPAAKGTVLQEAKL.

This sequence belongs to the CD36 family. In terms of processing, N-glycosylated. The six cysteines of the extracellular domain are all involved in intramolecular disulfide bonds.

It is found in the cell membrane. Its subcellular location is the membrane. The protein resides in the caveola. In terms of biological role, receptor for different ligands such as phospholipids, cholesterol ester, lipoproteins, phosphatidylserine and apoptotic cells. Receptor for HDL, mediating selective uptake of cholesteryl ether and HDL-dependent cholesterol efflux. Also facilitates the flux of free and esterified cholesterol between the cell surface and apoB-containing lipoproteins and modified lipoproteins, although less efficiently than HDL. May be involved in the phagocytosis of apoptotic cells, via its phosphatidylserine binding activity. This chain is Scavenger receptor class B member 1 (SCARB1), found in Cricetulus griseus (Chinese hamster).